We begin with the raw amino-acid sequence, 170 residues long: Cathelicidin antimicrobial peptide (170 aa).

A signal peptide spans 1–30 (MKTQRDGPSLGRWSLVLLLLGLTMPLAITA). A propeptide spans 31–131 (QVLSYQEAVL…DISCDKDERK (101 aa)) (cathelin-like domain (CLD)). 2 cysteine pairs are disulfide-bonded: Cys86–Cys97 and Cys108–Cys125. The segment at 150–162 (FKKIGQKINDFLG) is active core.

It belongs to the cathelicidin family. As to quaternary structure, monomer, homodimer or homotrimer (in vitro). Oligomerizes as tetra- or hexamer in solution (in vitro). Proteolytically cleaved by proteinase PRTN3 into antibacterial peptide LL-37. Proteolytically cleaved by cathepsin CTSG and neutrophil elastase ELANE. In terms of processing, resistant to proteolytic degradation in solution, and when bound to both zwitterionic (mimicking mammalian membranes) and negatively charged membranes (mimicking bacterial membranes). Post-translationally, after secretion onto the skin surface, the CAMP gene product is processed by a serine protease-dependent mechanism into multiple novel antimicrobial peptides distinct from and shorter than cathelicidin LL-37. These peptides show enhanced antimicrobial action, acquiring the ability to kill skin pathogens such as S.aureus, E.coli and C.albicans. These peptides have lost the ability to stimulate CXCL8/IL8 release from keratinocytes. The peptides act synergistically, killing bacteria at lower concentrations when present together, and maintain activity at increased salt condition.

The protein localises to the secreted. The protein resides in the vesicle. In terms of biological role, antimicrobial protein that is an integral component of the innate immune system. Binds to bacterial lipopolysaccharides (LPS). Acts via neutrophil N-formyl peptide receptors to enhance the release of CXCL2. Postsecretory processing generates multiple cathelicidin antimicrobial peptides with various lengths which act as a topical antimicrobial defense in sweat on skin. The unprocessed precursor form, cathelicidin antimicrobial peptide, inhibits the growth of Gram-negative E.coli and E.aerogenes with efficiencies comparable to that of the mature peptide LL-37 (in vitro). Its function is as follows. Antimicrobial peptide that is an integral component of the innate immune system. Binds to bacterial lipopolysaccharides (LPS). Causes membrane permeabilization by forming transmembrane pores (in vitro). Causes lysis of E.coli. Exhibits antimicrobial activity against Gram-negative bacteria such as P.aeruginosa, S.typhimurium, E.aerogenes, E.coli and P.syringae, Gram-positive bacteria such as L.monocytogenes, S.epidermidis, S.pyogenes and S.aureus, as well as vancomycin-resistant enterococci (in vitro). Exhibits antimicrobial activity against methicillin-resistant S.aureus, P.mirabilis, and C.albicans in low-salt media, but not in media containing 100 mM NaCl (in vitro). Forms chiral supramolecular assemblies with quinolone signal (PQS) molecules of P.aeruginosa, which may lead to interference of bacterial quorum signaling and perturbance of bacterial biofilm formation. May form supramolecular fiber-like assemblies on bacterial membranes. Induces cytokine and chemokine producation as well as TNF/TNFA and CSF2/GMCSF production in normal human keratinocytes. Exhibits hemolytic activity against red blood cells. Exhibits antimicrobial activity against E.coli and B.megaterium (in vitro). In Cebus capucinus (White-faced sapajou), this protein is Cathelicidin antimicrobial peptide.